We begin with the raw amino-acid sequence, 330 residues long: Phosphate acyltransferase (330 aa).

Belongs to the PlsX family. In terms of assembly, homodimer. Probably interacts with PlsY.

The protein resides in the cytoplasm. The enzyme catalyses a fatty acyl-[ACP] + phosphate = an acyl phosphate + holo-[ACP]. The protein operates within lipid metabolism; phospholipid metabolism. Catalyzes the reversible formation of acyl-phosphate (acyl-PO(4)) from acyl-[acyl-carrier-protein] (acyl-ACP). This enzyme utilizes acyl-ACP as fatty acyl donor, but not acyl-CoA. The polypeptide is Phosphate acyltransferase (Streptococcus pneumoniae (strain 70585)).